Reading from the N-terminus, the 491-residue chain is Cholesterol 22-monohydroxylase CYP90B51 (491 aa).

Residues 6–26 form a helical membrane-spanning segment; the sequence is ITFYCLSSILSVLLIFIFILI. Residue cysteine 437 coordinates heme.

This sequence belongs to the cytochrome P450 family. Mainly expressed in leaves and seed pods and, to a lower extent, in flowers and stems.

It localises to the membrane. It carries out the reaction cholesterol + reduced [NADPH--hemoprotein reductase] + O2 = (22S)-22-hydroxycholesterol + oxidized [NADPH--hemoprotein reductase] + H2O + H(+). It participates in steroid metabolism; cholesterol metabolism. Canonical brassinosteroid (BR)-biosynthetic enzyme capable of converting cholesterol to 22S-hydroxycholesterol via sterol-C22 hydroxylation. This Trigonella foenum-graecum (Fenugreek) protein is Cholesterol 22-monohydroxylase CYP90B51.